A 92-amino-acid chain; its full sequence is UPF0250 protein Smlt4048 (92 aa).

It belongs to the UPF0250 family.

The sequence is that of UPF0250 protein Smlt4048 from Stenotrophomonas maltophilia (strain K279a).